Reading from the N-terminus, the 335-residue chain is Tetraacyldisaccharide 4'-kinase (335 aa).

ATP is bound at residue 59 to 66 (TAGGNGKT).

Belongs to the LpxK family.

The catalysed reaction is a lipid A disaccharide + ATP = a lipid IVA + ADP + H(+). The protein operates within glycolipid biosynthesis; lipid IV(A) biosynthesis; lipid IV(A) from (3R)-3-hydroxytetradecanoyl-[acyl-carrier-protein] and UDP-N-acetyl-alpha-D-glucosamine: step 6/6. In terms of biological role, transfers the gamma-phosphate of ATP to the 4'-position of a tetraacyldisaccharide 1-phosphate intermediate (termed DS-1-P) to form tetraacyldisaccharide 1,4'-bis-phosphate (lipid IVA). The protein is Tetraacyldisaccharide 4'-kinase of Vibrio campbellii (strain ATCC BAA-1116).